Reading from the N-terminus, the 275-residue chain is Vitamin B12-binding protein (275 aa).

An N-terminal signal peptide occupies residues 1-19 (MMNKICLYLPLFFSSLTMA). The Fe/B12 periplasmic-binding domain occupies 25–272 (RVISLAPHAT…EVCEHFESVK (248 aa)). Cysteine 185 and cysteine 265 are joined by a disulfide.

This sequence belongs to the BtuF family. As to quaternary structure, the complex is composed of two ATP-binding proteins (BtuD), two transmembrane proteins (BtuC) and a solute-binding protein (BtuF).

The protein resides in the periplasm. In terms of biological role, part of the ABC transporter complex BtuCDF involved in vitamin B12 import. Binds vitamin B12 and delivers it to the periplasmic surface of BtuC. The chain is Vitamin B12-binding protein from Vibrio parahaemolyticus serotype O3:K6 (strain RIMD 2210633).